Here is a 430-residue protein sequence, read N- to C-terminus: 3-phosphoshikimate 1-carboxyvinyltransferase (430 aa).

The 3-phosphoshikimate site is built by Lys20, Ser21, and Arg25. A phosphoenolpyruvate-binding site is contributed by Lys20. The phosphoenolpyruvate site is built by Gly92 and Arg120. Ser166, Gln168, Asp312, and Lys339 together coordinate 3-phosphoshikimate. Gln168 contacts phosphoenolpyruvate. Catalysis depends on Asp312, which acts as the Proton acceptor. Phosphoenolpyruvate contacts are provided by Arg343 and Arg387.

Belongs to the EPSP synthase family. In terms of assembly, monomer.

It is found in the cytoplasm. It carries out the reaction 3-phosphoshikimate + phosphoenolpyruvate = 5-O-(1-carboxyvinyl)-3-phosphoshikimate + phosphate. The protein operates within metabolic intermediate biosynthesis; chorismate biosynthesis; chorismate from D-erythrose 4-phosphate and phosphoenolpyruvate: step 6/7. Catalyzes the transfer of the enolpyruvyl moiety of phosphoenolpyruvate (PEP) to the 5-hydroxyl of shikimate-3-phosphate (S3P) to produce enolpyruvyl shikimate-3-phosphate and inorganic phosphate. The chain is 3-phosphoshikimate 1-carboxyvinyltransferase from Lactococcus lactis subsp. lactis (strain IL1403) (Streptococcus lactis).